The sequence spans 356 residues: CMP-sialic acid transporter 2 (356 aa).

Positions 1–24 are enriched in basic and acidic residues; the sequence is MEYRRVKDQESYDVVSQKDIESPG. A disordered region spans residues 1–43; the sequence is MEYRRVKDQESYDVVSQKDIESPGERSLSSTSATSSLSTAGAS. Over 1-52 the chain is Cytoplasmic; sequence MEYRRVKDQESYDVVSQKDIESPGERSLSSTSATSSLSTAGASKGNNSWKLK. A compositionally biased stretch (low complexity) spans 27–43; sequence SLSSTSATSSLSTAGAS. The helical transmembrane segment at 53-73 threads the bilayer; it reads SIVTLALTLLTSSQAILIVWS. Topologically, residues 74–82 are lumenal; the sequence is KRAGKYEYS. Residues 83–103 traverse the membrane as a helical segment; that stretch reads VTTANFSVEALKCLLSLIALY. At 104–125 the chain is on the cytoplasmic side; the sequence is RTWNSQGVTEDNRLSTSFDEVS. Residues 126 to 146 traverse the membrane as a helical segment; that stretch reads VYPIPAILYMVKNLLQYYIFA. Residues 147 to 149 are Lumenal-facing; it reads YVD. The helical transmembrane segment at 150–172 threads the bilayer; it reads APAYQILKNLNIISTGVLYRIIL. Residues 173–175 are Cytoplasmic-facing; it reads KKK. The chain crosses the membrane as a helical span at residues 176-196; the sequence is LSEIQWAAFILLCAGCTTAQL. Residues 197 to 211 lie on the Lumenal side of the membrane; the sequence is NPSSDHVLQTPIQGW. A helical transmembrane segment spans residues 212-232; the sequence is VMAIVMALLSGFAGVYTEAII. At 233-239 the chain is on the cytoplasmic side; that stretch reads KKRPSRN. Residues 240 to 260 form a helical membrane-spanning segment; the sequence is INVQNFWLYIFGMLFNLVAIC. The Lumenal segment spans residues 261–277; that stretch reads VQDFDAVMNKGFFHGYS. Residues 278 to 298 form a helical membrane-spanning segment; the sequence is FITVLMILNHALSGIAVSMVM. At 299-314 the chain is on the cytoplasmic side; that stretch reads KYADNIVKVYSTSVAM. Residues 315–335 traverse the membrane as a helical segment; sequence LLTAVVSVFLFGFHLSLAFFL. Residues 336 to 356 lie on the Lumenal side of the membrane; it reads GSTVVSVSVYLHSVGKPQPQK.

This sequence belongs to the nucleotide-sugar transporter family. CMP-Sialate:CMP antiporter (TC 2.A.7.12) subfamily.

The protein localises to the golgi apparatus membrane. Sugar transporter involved in the transport of CMP-sialic acid from the cytoplasm into the Golgi. May transport important nucleotide sugars such as CMP-Kdo (2-keto-3-deoxy-D-manno-octulosonic acid) in physiological conditions. The chain is CMP-sialic acid transporter 2 from Oryza sativa subsp. indica (Rice).